The chain runs to 475 residues: Trifunctional enzyme subunit beta, mitochondrial (475 aa).

A mitochondrion-targeting transit peptide spans 1–34 (MISLLTYTLKNLPNTSKWALRFCMRPLSSSSQLQ). Residue K73 is modified to N6-acetyllysine; alternate. K73 is subject to N6-succinyllysine; alternate. C139 acts as the Acyl-thioester intermediate in catalysis. Residues 174-221 (IRHSRKMRKMMLDLNKAKTLAQRLSIISKFRLNFLSPELPAVSEFSTS) lie within the membrane without spanning it. The residue at position 189 (K189) is an N6-acetyllysine; alternate. Residue K189 is modified to N6-succinyllysine; alternate. An N6-succinyllysine mark is found at K191 and K292. K294 carries the N6-acetyllysine; alternate modification. K294 carries the N6-succinyllysine; alternate modification. K299 carries the N6-acetyllysine modification. K333 carries the N6-acetyllysine; alternate modification. K333 carries the N6-succinyllysine; alternate modification. Residues K349 and K362 each carry the N6-acetyllysine modification. Catalysis depends on C459, which acts as the Proton donor/acceptor.

It belongs to the thiolase-like superfamily. Thiolase family. Heterotetramer of 2 alpha/HADHA and 2 beta/HADHB subunits; forms the mitochondrial trifunctional enzyme. Also purified as higher order heterooligomers including a 4 alpha/HADHA and 4 beta/HADHB heterooligomer which physiological significance remains unclear. The mitochondrial trifunctional enzyme interacts with MTLN. Interacts with RSAD2/viperin.

The protein localises to the mitochondrion. Its subcellular location is the mitochondrion inner membrane. It localises to the mitochondrion outer membrane. The protein resides in the endoplasmic reticulum. The enzyme catalyses an acyl-CoA + acetyl-CoA = a 3-oxoacyl-CoA + CoA. It catalyses the reaction butanoyl-CoA + acetyl-CoA = 3-oxohexanoyl-CoA + CoA. It carries out the reaction hexanoyl-CoA + acetyl-CoA = 3-oxooctanoyl-CoA + CoA. The catalysed reaction is octanoyl-CoA + acetyl-CoA = 3-oxodecanoyl-CoA + CoA. The enzyme catalyses decanoyl-CoA + acetyl-CoA = 3-oxododecanoyl-CoA + CoA. It catalyses the reaction dodecanoyl-CoA + acetyl-CoA = 3-oxotetradecanoyl-CoA + CoA. It carries out the reaction tetradecanoyl-CoA + acetyl-CoA = 3-oxohexadecanoyl-CoA + CoA. It functions in the pathway lipid metabolism; fatty acid beta-oxidation. In terms of biological role, mitochondrial trifunctional enzyme catalyzes the last three of the four reactions of the mitochondrial beta-oxidation pathway. The mitochondrial beta-oxidation pathway is the major energy-producing process in tissues and is performed through four consecutive reactions breaking down fatty acids into acetyl-CoA. Among the enzymes involved in this pathway, the trifunctional enzyme exhibits specificity for long-chain fatty acids. Mitochondrial trifunctional enzyme is a heterotetrameric complex composed of two proteins, the trifunctional enzyme subunit alpha/HADHA carries the 2,3-enoyl-CoA hydratase and the 3-hydroxyacyl-CoA dehydrogenase activities, while the trifunctional enzyme subunit beta/HADHB described here bears the 3-ketoacyl-CoA thiolase activity. The sequence is that of Trifunctional enzyme subunit beta, mitochondrial (HADHB) from Bos taurus (Bovine).